The chain runs to 20 residues: Photosystem II stability/assembly factor HCF136, chloroplastic (20 aa).

Belongs to the Ycf48 family.

Its subcellular location is the plastid. It is found in the chloroplast thylakoid lumen. Functionally, essential for photosystem II (PSII) biogenesis; required for assembly of an early intermediate in PSII assembly that includes D2 (psbD) and cytochrome b559. The sequence is that of Photosystem II stability/assembly factor HCF136, chloroplastic from Spinacia oleracea (Spinach).